The primary structure comprises 146 residues: 3-dehydroquinate dehydratase (146 aa).

The active-site Proton acceptor is Y22. 3 residues coordinate substrate: N73, H79, and D86. H99 acts as the Proton donor in catalysis. Substrate contacts are provided by residues 100–101 (IS) and R110.

The protein belongs to the type-II 3-dehydroquinase family. Homododecamer.

The enzyme catalyses 3-dehydroquinate = 3-dehydroshikimate + H2O. Its pathway is metabolic intermediate biosynthesis; chorismate biosynthesis; chorismate from D-erythrose 4-phosphate and phosphoenolpyruvate: step 3/7. Functionally, catalyzes a trans-dehydration via an enolate intermediate. This is 3-dehydroquinate dehydratase from Prochlorococcus marinus subsp. pastoris (strain CCMP1986 / NIES-2087 / MED4).